Here is a 337-residue protein sequence, read N- to C-terminus: Viral cathepsin (337 aa).

A signal peptide spans 1 to 16 (MNKLLILFLLLNAALT). Residues 17–126 (RQDNHASANN…VVDGPAQRQR (110 aa)) constitute a propeptide, activation peptide. Intrachain disulfides connect cysteine 147/cysteine 188, cysteine 181/cysteine 221, and cysteine 276/cysteine 324. The active site involves cysteine 150. Catalysis depends on residues histidine 283 and asparagine 303.

The protein belongs to the peptidase C1 family. Synthesized as an inactive proenzyme and activated by proteolytic removal of the inhibitory propeptide.

It carries out the reaction Endopeptidase of broad specificity, hydrolyzing substrates of both cathepsin L and cathepsin B.. Cysteine protease that plays an essential role in host liquefaction to facilitate horizontal transmission of the virus. May participate in the degradation of foreign protein expressed by the baculovirus system. This chain is Viral cathepsin (VCATH), found in Lepidoptera (butterflies and moths).